The following is a 406-amino-acid chain: Kelch domain-containing protein 1 (406 aa).

Kelch repeat units lie at residues 24–76, 80–134, 135–181, 208–258, 260–307, and 311–361; these read FLYV…CGAC, KLYI…VYKD, RLIY…TKTQ, KGYI…PIAD, KLFL…ACLG, and EIMV…LESQ.

As to quaternary structure, component of a CRL5 E3 ubiquitin-protein ligase complex, also named ECS (Elongin BC-CUL2/5-SOCS-box protein) complex, composed of CUL5, Elongin BC (ELOB and ELOC), RBX1 and substrate-specific adapter KLHDC1. In terms of tissue distribution, widely expressed, with high levels in skeletal muscle, pancreas and liver. Undetectable in peripheral blood leukocytes.

It localises to the cytoplasm. The protein resides in the cytosol. Its pathway is protein modification; protein ubiquitination. In terms of biological role, substrate-recognition component of a Cul5-RING (CRL5) E3 ubiquitin-protein ligase complex of the DesCEND (destruction via C-end degrons) pathway, which recognizes a C-degron located at the extreme C terminus of target proteins, leading to their ubiquitination and degradation. The C-degron recognized by the DesCEND pathway is usually a motif of less than ten residues and can be present in full-length proteins, truncated proteins or proteolytically cleaved forms. The CRL5(KLHDC1) complex mediates ubiquitination and degradation of truncated SELENOS selenoprotein produced by failed UGA/Sec decoding, which ends with a glycine. The sequence is that of Kelch domain-containing protein 1 from Homo sapiens (Human).